A 97-amino-acid polypeptide reads, in one-letter code: HssA/B-like protein 38 (97 aa).

The interval 1–29 (MTLFSSISSISNPMTSSKSSISSFGSGTS) is disordered.

This sequence belongs to the hssA/B family.

The polypeptide is HssA/B-like protein 38 (hssl38) (Dictyostelium discoideum (Social amoeba)).